The sequence spans 261 residues: MSDILDKIIAVKREEIAAALESAPLEELKVQASARDSRDFVGALRDKHAAGHAAVIAEVKKASPSKGVLREHFVPADIARSYAQHGAACLSVLTDERFFQGSARYLEQARAACALPVLRKDFIVDAYQVLEARAMGADAILLIAAALDTPLMIDLEAYAHSLGLAVLVEVHNRSELDEALKLKTPLVGINNRNLRTFETTIDTTLGMLDAIPDDRIVVTESGILSRADVERMEAAGVHTFLVGEAFMRAENPGAELARMFF.

This sequence belongs to the TrpC family.

The catalysed reaction is 1-(2-carboxyphenylamino)-1-deoxy-D-ribulose 5-phosphate + H(+) = (1S,2R)-1-C-(indol-3-yl)glycerol 3-phosphate + CO2 + H2O. It participates in amino-acid biosynthesis; L-tryptophan biosynthesis; L-tryptophan from chorismate: step 4/5. The sequence is that of Indole-3-glycerol phosphate synthase from Burkholderia pseudomallei (strain 668).